The primary structure comprises 383 residues: MVVLSEIPGDPNEDNQNENPQEEVENLPILLQLPEELIASIVALIPRCHYPSLSLVSRAFRHLITSQELYVARSNLGFTEPVLYALIGFQAYTRPSWFFLRRSNFPLQLHRIRSLPPMLSGAAVVTIDYKMYVMGGCIGYNHPASSNVIVIDCRFHTWKYLPDMKRARCRAATGIIDGRIYVIGGCKKQDADWVEVFDVTTQSWETVPSECPNDANENGEFITYVVMQGRLFILDLECCFSYEPVQGLWESWDDGSELMRFWHSSSSCVVGDLLYALDLTCALEHPIVVYYPNELVWRPVMGVDTAHLPILTEYTSTLANFDGKLVILGGGDCSESSSEIWCVEIALETRQGDQIWGVVKSVSIVSRDLPMRHVIELCRTVMV.

The segment at 1–21 (MVVLSEIPGDPNEDNQNENPQ) is disordered. Positions 11 to 21 (PNEDNQNENPQ) are enriched in acidic residues. The 47-residue stretch at 27–73 (LPILLQLPEELIASIVALIPRCHYPSLSLVSRAFRHLITSQELYVAR) folds into the F-box domain. Kelch repeat units lie at residues 130–178 (KMYV…IIDG), 179–224 (RIYV…FITY), 226–272 (VMQG…VVGD), 274–317 (LYAL…YTST), and 324–370 (KLVI…RDLP).

The polypeptide is F-box/kelch-repeat protein At2g29830 (Arabidopsis thaliana (Mouse-ear cress)).